The following is a 347-amino-acid chain: Dihydroorotase (347 aa).

Residues H17 and H19 each contribute to the Zn(2+) site. Substrate-binding positions include H19–R21 and N45. The Zn(2+) site is built by K102, H139, and H177. K102 is subject to N6-carboxylysine. H139 contacts substrate. L222 serves as a coordination point for substrate. D250 contributes to the Zn(2+) binding site. Residue D250 is part of the active site. Positions 254 and 266 each coordinate substrate.

This sequence belongs to the metallo-dependent hydrolases superfamily. DHOase family. Class II DHOase subfamily. In terms of assembly, homodimer. Zn(2+) is required as a cofactor.

It catalyses the reaction (S)-dihydroorotate + H2O = N-carbamoyl-L-aspartate + H(+). It functions in the pathway pyrimidine metabolism; UMP biosynthesis via de novo pathway; (S)-dihydroorotate from bicarbonate: step 3/3. Its function is as follows. Catalyzes the reversible cyclization of carbamoyl aspartate to dihydroorotate. In Acidovorax sp. (strain JS42), this protein is Dihydroorotase.